The sequence spans 682 residues: Tail-specific protease (682 aa).

The first 22 residues, 1-22, serve as a signal peptide directing secretion; it reads MNTFFRLTALAGLLALAGQSFA. The 85-residue stretch at 238-322 folds into the PDZ domain; sequence NTEMSLSLEG…SKVRLEILPA (85 aa). Residues Ser-452, Asp-463, and Lys-477 each act as charge relay system in the active site.

It belongs to the peptidase S41A family.

The protein localises to the cell inner membrane. The catalysed reaction is The enzyme shows specific recognition of a C-terminal tripeptide, Xaa-Yaa-Zaa, in which Xaa is preferably Ala or Leu, Yaa is preferably Ala or Tyr, and Zaa is preferably Ala, but then cleaves at a variable distance from the C-terminus. A typical cleavage is -Ala-Ala-|-Arg-Ala-Ala-Lys-Glu-Asn-Tyr-Ala-Leu-Ala-Ala.. Functionally, involved in the cleavage of a C-terminal peptide of 11 residues from the precursor form of penicillin-binding protein 3 (PBP3). May be involved in protection of the bacterium from thermal and osmotic stresses. This is Tail-specific protease (prc) from Salmonella typhimurium (strain LT2 / SGSC1412 / ATCC 700720).